The chain runs to 51 residues: UPF0391 membrane protein PsycPRwf_2202 (51 aa).

2 helical membrane passes run 6-26 (IIFA…VAGL) and 27-47 (SQNF…IGFI).

Belongs to the UPF0391 family.

The protein localises to the cell membrane. The chain is UPF0391 membrane protein PsycPRwf_2202 from Psychrobacter sp. (strain PRwf-1).